The chain runs to 277 residues: Phosphate import ATP-binding protein PstB 2 (277 aa).

Residues 31–272 (IEVPGLSLFY…PAKKQTEDYI (242 aa)) enclose the ABC transporter domain. Residue 63–70 (GPSGCGKS) coordinates ATP.

The protein belongs to the ABC transporter superfamily. Phosphate importer (TC 3.A.1.7) family. The complex is composed of two ATP-binding proteins (PstB), two transmembrane proteins (PstC and PstA) and a solute-binding protein (PstS).

It is found in the cell inner membrane. The catalysed reaction is phosphate(out) + ATP + H2O = ADP + 2 phosphate(in) + H(+). Its function is as follows. Part of the ABC transporter complex PstSACB involved in phosphate import. Responsible for energy coupling to the transport system. This Pseudomonas putida (strain ATCC 47054 / DSM 6125 / CFBP 8728 / NCIMB 11950 / KT2440) protein is Phosphate import ATP-binding protein PstB 2.